The chain runs to 715 residues: Transcription activator of gluconeogenesis MGYG_02011 (715 aa).

The span at 1 to 14 shows a compositional bias: polar residues; that stretch reads MSPHQTTGQESDNM. The tract at residues 1 to 28 is disordered; that stretch reads MSPHQTTGQESDNMAVNGENAPASSQYI. A DNA-binding region (zn(2)-C6 fungal-type) is located at residues 66–94; that stretch reads CYACQRGHLTCGDERPCQRCIKRGFQDAC. Composition is skewed to polar residues over residues 129 to 166, 179 to 191, 203 to 223, and 362 to 385; these read QNNV…PQNK, YASQ…TYQI, SLPQ…GQFN, and MMTT…RPNA. Disordered regions lie at residues 129–223, 354–414, 534–569, and 628–663; these read QNNV…GQFN, SPAS…RRRH, NHNV…NSST, and GSNG…NGRG. The span at 386 to 400 shows a compositional bias: low complexity; it reads SVSQQRQQPVVSTPQ. Composition is skewed to polar residues over residues 535 to 554 and 639 to 649; these read HNVN…SRGS and GEASSSEANEL. Over residues 650–662 the composition is skewed to low complexity; that stretch reads NGSNANGATTNGR.

It belongs to the ERT1/acuK family.

It localises to the nucleus. Functionally, transcription factor which regulates nonfermentable carbon utilization. Activator of gluconeogenetic genes. The chain is Transcription activator of gluconeogenesis MGYG_02011 from Arthroderma gypseum (strain ATCC MYA-4604 / CBS 118893) (Microsporum gypseum).